Reading from the N-terminus, the 860-residue chain is Transforming growth factor-beta receptor-associated protein 1 (860 aa).

In terms of domain architecture, CNH spans 24-297 (HISIECVECC…HILQDFEGRV (274 aa)). The CHCR repeat unit spans residues 564-732 (RPLDEQQQTS…YLRAGPSAQD (169 aa)).

The protein belongs to the TRAP1 family. Interacts with TGFBR2 and ACVR2B; in the absence of ligand stimulation. Interacts with TGFBR1, ACVRL1, BMPR1A and ACVR1B; in the absence of ligand stimulation and to a less extent. Interacts with SMAD4; the interaction seems to be mutually exclusive with the interaction of SMAD4 and phosphorylated SMAD2. May interact with ALOX5. Interacts with RAB5C. Interacts with VPS8, VPS11 and VPS16. Component of the putative class C core vacuole/endosome tethering (CORVET) complex; the core of which composed of the class C Vps proteins VPS11, VPS16, VPS18 and VPS33A, is associated with VPS8 and TGFBRAP1.

The protein resides in the cytoplasm. Its subcellular location is the early endosome. Functionally, plays a role in the TGF-beta/activin signaling pathway. It associates with inactive heteromeric TGF-beta and activin receptor complexes, mainly through the type II receptor, and is released upon activation of signaling. May recruit SMAD4 to the vicinity of the receptor complex and facilitate its interaction with receptor-regulated Smads, such as SMAD2. Plays a role in vesicle-mediated protein trafficking of the endocytic membrane transport pathway. Believed to act as a component of the putative CORVET endosomal tethering complexes which is proposed to be involved in the Rab5-to-Rab7 endosome conversion probably implicating MON1A/B, and via binding SNAREs and SNARE complexes to mediate tethering and docking events during SNARE-mediated membrane fusion. The CORVET complex is proposed to function as a Rab5 effector to mediate early endosome fusion probably in specific endosome subpopulations. Functions predominantly in APPL1-containing endosomes and in degradative but not recycling trafficking of endocytosed cargo. The protein is Transforming growth factor-beta receptor-associated protein 1 (Tgfbrap1) of Mus musculus (Mouse).